Reading from the N-terminus, the 1217-residue chain is Rho family-interacting cell polarization regulator 1 (1217 aa).

A Phosphoserine modification is found at S22. Residues 83 to 112 (RGLTAYLEVHQQEQEKLQRQIKESKRNSRL) are a coiled coil. S345 and S347 each carry phosphoserine. The residue at position 351 (T351) is a Phosphothreonine. The tract at residues 371 to 413 (NGTAWSLSSESSDDSSSPQLSGTARYSSTPKPLVQQPEPLPVQ) is disordered. 2 stretches are compositionally biased toward low complexity: residues 376–391 (SLSSESSDDSSSPQLS) and 400–413 (PKPLVQQPEPLPVQ). S452 and S455 each carry phosphoserine. The segment at 565–762 (TSTTVGSTHK…SPSSIVPEPQ (198 aa)) is disordered. Over residues 579 to 594 (PLTSTGSIPSVTDSIQ) the composition is skewed to polar residues. The segment covering 595 to 649 (TTTSPTHTTPSPTHTTVSPTHSTPSPTHTTVSPSNAALSPSNATPSLSHSTTSPT) has biased composition (low complexity). A compositionally biased stretch (polar residues) spans 650–661 (QKATMSTHTTSA). A compositionally biased stretch (low complexity) spans 664–695 (PVQTTTSPISTTVSPSPSVDTAIISSSSAVPS). The segment covering 720–729 (ACTSSPSLAS) has biased composition (polar residues). The residue at position 742 (S742) is a Phosphoserine. A coiled-coil region spans residues 786-828 (RRLEEALRTLMAALDDYRGQFPELQGLEQEVTRLESLLMQRQG). The tract at residues 850–874 (FLNDDEDEDNDSPGDRPTSSPEVVA) is disordered. The segment covering 852–861 (NDDEDEDNDS) has biased composition (acidic residues). Phosphoserine occurs at positions 868 and 869.

Belongs to the RIPOR family. Interacts (via N-terminus) with RHOA (GTP-bound form); this interaction links active RHOA to STK24 and STK26 kinases. Interacts with RHOB. Interacts with RHOC. Interacts (via C-terminus) with PDCD10; this interaction occurs in a Rho-independent manner. Interacts (via C-terminus) with STK24; this interaction occurs in a PDCD10-dependent and Rho-independent manner. Interacts (via C-terminus) with STK26; this interaction occurs in a PDCD10-dependent and Rho-independent manner. Interacts (via N-terminus) with 14-3-3 proteins; these interactions occur in a Rho-dependent manner.

The protein resides in the cytoplasm. Its subcellular location is the golgi apparatus. Its function is as follows. Downstream effector protein for Rho-type small GTPases that plays a role in cell polarity and directional migration. Acts as an adapter protein, linking active Rho proteins to STK24 and STK26 kinases, and hence positively regulates Golgi reorientation in polarized cell migration upon Rho activation. Involved in the subcellular relocation of STK26 from the Golgi to cytoplasm punctae in a Rho- and PDCD10-dependent manner upon serum stimulation. The sequence is that of Rho family-interacting cell polarization regulator 1 from Rattus norvegicus (Rat).